Reading from the N-terminus, the 311-residue chain is Methionyl-tRNA formyltransferase (311 aa).

112-115 (SLLP) is a binding site for (6S)-5,6,7,8-tetrahydrofolate.

The protein belongs to the Fmt family.

The enzyme catalyses L-methionyl-tRNA(fMet) + (6R)-10-formyltetrahydrofolate = N-formyl-L-methionyl-tRNA(fMet) + (6S)-5,6,7,8-tetrahydrofolate + H(+). Attaches a formyl group to the free amino group of methionyl-tRNA(fMet). The formyl group appears to play a dual role in the initiator identity of N-formylmethionyl-tRNA by promoting its recognition by IF2 and preventing the misappropriation of this tRNA by the elongation apparatus. The sequence is that of Methionyl-tRNA formyltransferase from Sinorhizobium fredii (strain NBRC 101917 / NGR234).